Reading from the N-terminus, the 928-residue chain is Protein Niban 1 (928 aa).

Gly2 carries N-myristoyl glycine lipidation. A phosphoserine mark is found at Ser579, Ser582, Ser596, Ser602, and Ser646. Residues 580-596 show a composition bias toward polar residues; sequence VSSLTDLKPPTGSNQAS. The tract at residues 580–600 is disordered; the sequence is VSSLTDLKPPTGSNQASPARR. Disordered regions lie at residues 618 to 654 and 669 to 707; these read VFQE…GTEQ and ATED…TASG. Positions 690 to 701 are enriched in acidic residues; the sequence is LEDEEPAQEEPE. At Ser708 the chain carries Phosphoserine. Disordered regions lie at residues 723 to 877 and 899 to 928; these read PVDS…ATAS and PNPD…PSEE. Low complexity predominate over residues 801–818; it reads GGLTEEPLGPMEGELPGE. Positions 825–834 are enriched in basic and acidic residues; sequence HEGRGGKCTE. Low complexity predominate over residues 865 to 877; the sequence is MGGQSSAAQATAS. Basic and acidic residues predominate over residues 905 to 915; it reads LSHKDDVKEGE. Phosphoserine is present on Ser926.

Belongs to the Niban family. In terms of tissue distribution, expressed in various types of thyroid tumor such as papillary thyroid carcinomas and oxyphilic thyroid tumors but not in normal thyroid tissue (at protein level). Strongly expressed in heart, skeletal muscle, pancreas, white blood cells and prostate with moderate expression in colon and spleen. Expressed in renal carcinoma cells but not in normal kidney.

It localises to the cytoplasm. The protein localises to the membrane. Regulates phosphorylation of a number of proteins involved in translation regulation including EIF2A, EIF4EBP1 and RPS6KB1. May be involved in the endoplasmic reticulum stress response. In Homo sapiens (Human), this protein is Protein Niban 1.